The following is a 428-amino-acid chain: Somatostatin receptor type 3 (428 aa).

Over residues 1-12 (MATVTYPSSEPT) the composition is skewed to polar residues. A disordered region spans residues 1 to 20 (MATVTYPSSEPTTLDPGNAS). Residues 1-45 (MATVTYPSSEPTTLDPGNASSTWPLDTTLGNTSAGASLTGLAVSG) lie on the Extracellular side of the membrane. N18 and N31 each carry an N-linked (GlcNAc...) asparagine glycan. Residues 46-71 (ILISLVYLVVCVVGLLGNSLVIYVVL) traverse the membrane as a helical segment. At 72-81 (RHTSSPSVTS) the chain is on the cytoplasmic side. The chain crosses the membrane as a helical span at residues 82 to 103 (VYILNLALADELFMLGLPFLAA). Over 104-118 (QNALSYWPFGSLMCR) the chain is Extracellular. C117 and C192 are joined by a disulfide. The chain crosses the membrane as a helical span at residues 119–140 (LVMAVDGINQFTSIFCLTVMSV). Residues 141–162 (DRYLAVVHPTRSARWRTAPVAR) are Cytoplasmic-facing. A helical transmembrane segment spans residues 163-182 (TVSAAVWVASAVVVLPVVVF). The Extracellular portion of the chain corresponds to 183–206 (SGVPRGMSTCHMQWPEPAAAWRTA). Residues 207-232 (FIIYTAALGFFGPLLVICLCYLLIVV) form a helical membrane-spanning segment. Over 233–266 (KVRSTTRRVRAPSCQWVQAPACQRRRRSERRVTR) the chain is Cytoplasmic. The helical transmembrane segment at 267–288 (MVVAVVALFVLCWMPFYLLNIV) threads the bilayer. The Extracellular segment spans residues 289–302 (NVVCPLPEEPAFFG). The chain crosses the membrane as a helical span at residues 303–325 (LYFLVVALPYANSCANPILYGFL). Over 326 to 428 (SYRFKQGFRR…GDKASTLSHL (103 aa)) the chain is Cytoplasmic. S341, S346, and S351 each carry phosphoserine. The disordered stretch occupies residues 344–428 (IRSQEPGSGP…GDKASTLSHL (85 aa)). T357 is modified (phosphothreonine). Acidic residues predominate over residues 357–370 (TEEEEDEEEEERRE). A compositionally biased stretch (polar residues) spans 385-412 (RLSQIAQAGTSGQQPRPCTGTAKEQQLL).

Belongs to the G-protein coupled receptor 1 family. As to quaternary structure, homodimer and heterodimer with SSTR2. Heterodimerization with SSTR2 inactivates SSTR3 receptor function. In terms of processing, phosphorylated. Phosphorylation increases upon somatostatin binding. In the brain, primarily observed in the forebrain. Moderate levels found throughout laminae 2-6 of the neocortex and allocortex, and high levels in lamina 2 of the piriform and entorhinal cortices. High levels also present in the cornu ammonis fields of the hippocampus. In the amygdala, highly expressed in the nucleus of the lateral olfactory tract with expression also detected in the rostral portions of the basal magnocellular and lateral nuclei. In the diencephalon, moderate levels observed in the ventromedial and arcuate nuclei of the hypothalamus. In the midbrain, moderate levels found in the lateral portion of the substantia nigra pars reticulata.

The protein resides in the cell membrane. In terms of biological role, receptor for somatostatin-14 and -28. This receptor is coupled via pertussis toxin sensitive G proteins to inhibition of adenylyl cyclase. The chain is Somatostatin receptor type 3 (Sstr3) from Mus musculus (Mouse).